The sequence spans 621 residues: Kininogen-1 (621 aa).

An N-terminal signal peptide occupies residues 1–18 (MKLITILFLCSRLLPSLT). A Cystatin kininogen-type 1 domain is found at 27 to 131 (CNDQDVFKAV…IQTCLITPAE (105 aa)). 9 cysteine pairs are disulfide-bonded: C27-C591, C82-C93, C106-C125, C141-C144, C205-C217, C228-C247, C263-C266, C327-C339, and C350-C369. N47 and N87 each carry an N-linked (GlcNAc...) asparagine glycan. An O-linked (GalNAc...) threonine; partial glycan is attached at T136. Residues 150–253 (TKSPDLEPVL…SQKCDLYPVK (104 aa)) form the Cystatin kininogen-type 2 domain. Residues N168 and N169 are each glycosylated (N-linked (GlcNAc...) asparagine). A glycan (N-linked (GlcNAc...) asparagine; partial) is linked at N197. Residue N204 is glycosylated (N-linked (GlcNAc...) asparagine). In terms of domain architecture, Cystatin kininogen-type 3 spans 272 to 375 (VDSPDLEEPL…TVNCQPLGQT (104 aa)). At S331 the chain carries Phosphoserine. Positions 396–497 (EGSTTVSLPH…GKNNGKHYDW (102 aa)) are disordered. A glycan (O-linked (GalNAc...) serine) is linked at S398. O-linked (GalNAc...) threonine glycans are attached at residues T399 and T400. The O-linked (GalNAc...) serine glycan is linked to S406. Residues 444–492 (GHKHKHDQGHGHHGSHGLGHGHQKQHGLGHGHKHGHGHGKHKNKGKNNG) show a composition bias toward basic residues. An O-linked (GalNAc...) serine glycan is attached at S512. O-linked (GalNAc...) threonine glycans are attached at residues T520, T524, T536, T548, T553, and T570. S581 is a glycosylation site (O-linked (GalNAc...) serine).

Post-translationally, bradykinin is released from kininogen by plasma kallikrein. In terms of processing, phosphorylated by FAM20C in the extracellular medium. Bradykinin is inactivated by ACE, which removes the dipeptide Arg-Phe from its C-terminus. As to expression, plasma.

It is found in the secreted. The protein localises to the extracellular space. Its function is as follows. Kininogens are inhibitors of thiol proteases. HMW-kininogen plays an important role in blood coagulation by helping to position optimally prekallikrein and factor XI next to factor XII; HMW-kininogen inhibits the thrombin- and plasmin-induced aggregation of thrombocytes. LMW-kininogen inhibits the aggregation of thrombocytes. LMW-kininogen is in contrast to HMW-kininogen not involved in blood clotting. Functionally, the active peptide bradykinin is a potent vasodilatator that is released from HMW-kininogen shows a variety of physiological effects: (A) influence in smooth muscle contraction, (B) induction of hypotension, (C) natriuresis and diuresis, (D) decrease in blood glucose level, (E) it is a mediator of inflammation and causes (E1) increase in vascular permeability, (E2) stimulation of nociceptors (4E3) release of other mediators of inflammation (e.g. prostaglandins), (F) it has a cardioprotective effect (directly via bradykinin action, indirectly via endothelium-derived relaxing factor action). The protein is Kininogen-1 (KNG1) of Bos taurus (Bovine).